Here is a 383-residue protein sequence, read N- to C-terminus: Probable endoplasmic reticulum-Golgi intermediate compartment protein 3 (383 aa).

At 1 to 26 (MLISQLKKFDAYPKTVDDFRVKTYTG) the chain is on the cytoplasmic side. The chain crosses the membrane as a helical span at residues 27-47 (AIVSIIGGVFILWLFFSQVTL). Residues 48–347 (YFSTDIHHEL…GKSFASFLTN (300 aa)) are Lumenal-facing. The helical transmembrane segment at 348 to 368 (VCAIIGGVFTVFGIFDSFIYY) threads the bilayer. Topologically, residues 369-383 (STKNLQKKIDLGKTF) are cytoplasmic.

Belongs to the ERGIC family.

The protein localises to the endoplasmic reticulum-Golgi intermediate compartment membrane. The protein resides in the golgi apparatus. It is found in the cis-Golgi network membrane. Its subcellular location is the endoplasmic reticulum membrane. Possible role in transport between endoplasmic reticulum and Golgi. The sequence is that of Probable endoplasmic reticulum-Golgi intermediate compartment protein 3 (ergic3) from Dictyostelium discoideum (Social amoeba).